A 128-amino-acid chain; its full sequence is Large-conductance mechanosensitive channel (128 aa).

The next 2 membrane-spanning stretches (helical) occupy residues 10–30 and 76–96; these read FAMR…GAFG and GMFI…FLMI.

It belongs to the MscL family. As to quaternary structure, homopentamer.

Its subcellular location is the cell inner membrane. In terms of biological role, channel that opens in response to stretch forces in the membrane lipid bilayer. May participate in the regulation of osmotic pressure changes within the cell. In Actinobacillus succinogenes (strain ATCC 55618 / DSM 22257 / CCUG 43843 / 130Z), this protein is Large-conductance mechanosensitive channel.